The following is a 360-amino-acid chain: Photosystem II protein D1 (360 aa).

3 consecutive transmembrane segments (helical) span residues 29–46 (YIGW…TATC), 118–133 (HFLI…EWEL), and 142–156 (WICV…AATA). Position 118 (H118) interacts with chlorophyll a. Pheophytin a is bound at residue Y126. Residues D170 and E189 each coordinate [CaMn4O5] cluster. The helical transmembrane segment at 197 to 218 (FHMAGVAGVFGGALFSAMHGSL) threads the bilayer. Residue H198 coordinates chlorophyll a. A quinone-binding positions include H215 and 264–265 (SF). Residue H215 coordinates Fe cation. H272 serves as a coordination point for Fe cation. A helical membrane pass occupies residues 274 to 288 (FLGAWPVVGIWLTAI). [CaMn4O5] cluster contacts are provided by H332, E333, D342, and A344. Positions 345 to 360 (SNSVVPVALTAPSVEA) are excised as a propeptide.

The protein belongs to the reaction center PufL/M/PsbA/D family. As to quaternary structure, PSII is composed of 1 copy each of membrane proteins PsbA, PsbB, PsbC, PsbD, PsbE, PsbF, PsbH, PsbI, PsbJ, PsbK, PsbL, PsbM, PsbT, PsbX, PsbY, PsbZ, Psb30/Ycf12, at least 3 peripheral proteins of the oxygen-evolving complex and a large number of cofactors. It forms dimeric complexes. It depends on The D1/D2 heterodimer binds P680, chlorophylls that are the primary electron donor of PSII, and subsequent electron acceptors. It shares a non-heme iron and each subunit binds pheophytin, quinone, additional chlorophylls, carotenoids and lipids. D1 provides most of the ligands for the Mn4-Ca-O5 cluster of the oxygen-evolving complex (OEC). There is also a Cl(-1) ion associated with D1 and D2, which is required for oxygen evolution. The PSII complex binds additional chlorophylls, carotenoids and specific lipids. as a cofactor. Post-translationally, tyr-161 forms a radical intermediate that is referred to as redox-active TyrZ, YZ or Y-Z. In terms of processing, C-terminally processed by CTPA; processing is essential to allow assembly of the oxygen-evolving complex and thus photosynthetic growth.

It is found in the plastid. Its subcellular location is the chloroplast thylakoid membrane. It carries out the reaction 2 a plastoquinone + 4 hnu + 2 H2O = 2 a plastoquinol + O2. In terms of biological role, photosystem II (PSII) is a light-driven water:plastoquinone oxidoreductase that uses light energy to abstract electrons from H(2)O, generating O(2) and a proton gradient subsequently used for ATP formation. It consists of a core antenna complex that captures photons, and an electron transfer chain that converts photonic excitation into a charge separation. The D1/D2 (PsbA/PsbD) reaction center heterodimer binds P680, the primary electron donor of PSII as well as several subsequent electron acceptors. This is Photosystem II protein D1 from Cyanidioschyzon merolae (strain NIES-3377 / 10D) (Unicellular red alga).